The sequence spans 555 residues: 2-succinyl-5-enolpyruvyl-6-hydroxy-3-cyclohexene-1-carboxylate synthase (555 aa).

Belongs to the TPP enzyme family. MenD subfamily. As to quaternary structure, homodimer. Mg(2+) is required as a cofactor. Mn(2+) serves as cofactor. It depends on thiamine diphosphate as a cofactor.

It carries out the reaction isochorismate + 2-oxoglutarate + H(+) = 5-enolpyruvoyl-6-hydroxy-2-succinyl-cyclohex-3-ene-1-carboxylate + CO2. The protein operates within quinol/quinone metabolism; 1,4-dihydroxy-2-naphthoate biosynthesis; 1,4-dihydroxy-2-naphthoate from chorismate: step 2/7. Its pathway is quinol/quinone metabolism; menaquinone biosynthesis. Catalyzes the thiamine diphosphate-dependent decarboxylation of 2-oxoglutarate and the subsequent addition of the resulting succinic semialdehyde-thiamine pyrophosphate anion to isochorismate to yield 2-succinyl-5-enolpyruvyl-6-hydroxy-3-cyclohexene-1-carboxylate (SEPHCHC). The protein is 2-succinyl-5-enolpyruvyl-6-hydroxy-3-cyclohexene-1-carboxylate synthase of Kineococcus radiotolerans (strain ATCC BAA-149 / DSM 14245 / SRS30216).